We begin with the raw amino-acid sequence, 615 residues long: Zinc metalloproteinase R519 (615 aa).

The region spanning 1–611 is the Peptidase M13 domain; that stretch reads MTYRSCIPQN…LDPQLRSRIL (611 aa). His454 contributes to the Zn(2+) binding site. The active site involves Glu455. Zn(2+) is bound by residues His458 and Glu513. Asp517 functions as the Proton donor in the catalytic mechanism.

Belongs to the peptidase M13 family. It depends on Zn(2+) as a cofactor.

Its function is as follows. Zinc metalloprotease. The protein is Zinc metalloproteinase R519 of Acanthamoeba polyphaga (Amoeba).